A 406-amino-acid polypeptide reads, in one-letter code: Dematin (406 aa).

2 disordered regions span residues 1–30 and 78–333; these read MERL…PSSI and LPRS…DRGN. A compositionally biased stretch (low complexity) spans 11–29; sequence SPGSVSSSRDSSVPGSPSS. A phosphoserine mark is found at Ser-16, Ser-18, Ser-26, Ser-92, Ser-96, Ser-105, Ser-110, Ser-113, Ser-157, and Ser-227. Positions 105 to 114 are enriched in polar residues; sequence SPGTISQASA. Positions 217 to 228 are enriched in acidic residues; it reads EEEEEEEDDDSG. Residues 225–309 are interaction with RASGRF2; it reads DDSGEEMKAL…SRLQSTDFSP (85 aa). Basic and acidic residues-rich tracts occupy residues 229–243 and 253–262; these read EEMK…EELS and ILKEEMEKSL. A phosphoserine mark is found at Ser-270, Ser-280, Ser-290, Ser-304, Ser-316, Ser-334, Ser-373, and Ser-384. A compositionally biased stretch (polar residues) spans 282–323; it reads HAGTSKSSSLPAYGRTTLSRLQSTDFSPSGSEAESPGLQNGE. An HP domain is found at 338-406; sequence VLEQKIYPYE…NELKKKASLF (69 aa). Phosphoserine; by PKA is present on Ser-404.

The protein belongs to the villin/gelsolin family. As to quaternary structure, monomeric; under reducing conditions. Self-associates. Exists under oxidizing condition as a trimer linked by disulfide bonds. Found in a complex with DMTN, F-actin and spectrin. Found in a complex with ADD2, DMTN and SLC2A1. Interacts with F-actin, ITPKB and spectrin. Interacts with SLC2A1 (via C-terminus cytoplasmic region). Interacts with RASGRF2. In terms of processing, phosphorylated. Phosphorylation at Ser-404 by PKA causes the C-terminal headpiece domain to associate with the N-terminal core domain, and leads to the inhibition of its actin bundling activity.

Its subcellular location is the cytoplasm. It localises to the cytosol. The protein resides in the perinuclear region. The protein localises to the cytoskeleton. It is found in the cell membrane. Its subcellular location is the membrane. It localises to the endomembrane system. The protein resides in the cell projection. Membrane-cytoskeleton-associated protein with F-actin-binding activity that induces F-actin bundles formation and stabilization. Its F-actin-bundling activity is reversibly regulated upon its phosphorylation by the cAMP-dependent protein kinase A (PKA). Binds to the erythrocyte membrane glucose transporter-1 SLC2A1/GLUT1, and hence stabilizes and attaches the spectrin-actin network to the erythrocytic plasma membrane. Plays a role in maintaining the functional integrity of PKA-activated erythrocyte shape and the membrane mechanical properties. Also plays a role as a modulator of actin dynamics in fibroblasts; acts as a negative regulator of the RhoA activation pathway. In platelets, functions as a regulator of internal calcium mobilization across the dense tubular system that affects platelet granule secretion pathways and aggregation. Also required for the formation of a diverse set of cell protrusions, such as filopodia and lamellipodia, necessary for platelet cell spreading, motility and migration. Acts as a tumor suppressor and inhibits malignant cell transformation. In Bos taurus (Bovine), this protein is Dematin (DMTN).